A 123-amino-acid chain; its full sequence is Large ribosomal subunit protein bL12 (123 aa).

The protein belongs to the bacterial ribosomal protein bL12 family. Homodimer. Part of the ribosomal stalk of the 50S ribosomal subunit. Forms a multimeric L10(L12)X complex, where L10 forms an elongated spine to which 2 to 4 L12 dimers bind in a sequential fashion. Binds GTP-bound translation factors.

Functionally, forms part of the ribosomal stalk which helps the ribosome interact with GTP-bound translation factors. Is thus essential for accurate translation. The sequence is that of Large ribosomal subunit protein bL12 from Aliarcobacter butzleri (strain RM4018) (Arcobacter butzleri).